The chain runs to 216 residues: Imidazole glycerol phosphate synthase subunit HisH (216 aa).

The Glutamine amidotransferase type-1 domain maps to 2–216 (RVAIIDYGSG…LISNFLRWKP (215 aa)). Residue Cys88 is the Nucleophile of the active site. Catalysis depends on residues His196 and Glu198.

As to quaternary structure, heterodimer of HisH and HisF.

Its subcellular location is the cytoplasm. It catalyses the reaction 5-[(5-phospho-1-deoxy-D-ribulos-1-ylimino)methylamino]-1-(5-phospho-beta-D-ribosyl)imidazole-4-carboxamide + L-glutamine = D-erythro-1-(imidazol-4-yl)glycerol 3-phosphate + 5-amino-1-(5-phospho-beta-D-ribosyl)imidazole-4-carboxamide + L-glutamate + H(+). It carries out the reaction L-glutamine + H2O = L-glutamate + NH4(+). The protein operates within amino-acid biosynthesis; L-histidine biosynthesis; L-histidine from 5-phospho-alpha-D-ribose 1-diphosphate: step 5/9. IGPS catalyzes the conversion of PRFAR and glutamine to IGP, AICAR and glutamate. The HisH subunit catalyzes the hydrolysis of glutamine to glutamate and ammonia as part of the synthesis of IGP and AICAR. The resulting ammonia molecule is channeled to the active site of HisF. This chain is Imidazole glycerol phosphate synthase subunit HisH, found in Agrobacterium fabrum (strain C58 / ATCC 33970) (Agrobacterium tumefaciens (strain C58)).